Consider the following 61-residue polypeptide: Alpha-conotoxin-like Tx1.2 (61 aa).

A signal peptide spans 1-20 (MFTVFLLVVLATTVVSFTSG). A propeptide spanning residues 21-42 (RSTFRGRNAAAKASGLVSLTDR) is cleaved from the precursor. 2 positions are modified to 4-hydroxyproline: Pro-44 and Pro-50. 2 disulfide bridges follow: Cys-46–Cys-52 and Cys-47–Cys-60. The interval 48 to 50 (SHP) is ser-Xaa-Pro motif, crucial for potent interaction with nAChR.

The protein belongs to the conotoxin A superfamily. In terms of tissue distribution, expressed by the venom duct.

Its subcellular location is the secreted. Alpha-conotoxins act on postsynaptic membranes, they bind to the nicotinic acetylcholine receptors (nAChR) and thus inhibit them. This toxin also inhibits high voltage-activated (HVA) calcium channel currents in rat DRG neurons (8% inhibition at 1 uM toxin) probably by activating GABA(B) receptors (GABBR1 and/or GABBR2). This chain is Alpha-conotoxin-like Tx1.2, found in Conus textile (Cloth-of-gold cone).